The sequence spans 340 residues: MHTADFLDIEPTEISSILSGGYNHPLLREWQSERQLKKNMLIFPLFISDIPDEATPIDSLPNIKRFGINKLVDYVKPLVEKGLRSVILFGVPLKEGTKDPVGTAADDPEGPVIQAIKLLRKEFPELYIICDVCLCEYTSHGHCGVLYDDGTINRERSVSRIAAVAVNYAKAGAHCVAPSDMIDGRIKDIKKGLISAGLAHKTFVLSYAAKFSGNLYGPFRDAACSSPSNGDRKCYQLPQAGRGLARRALARDKNEGADGIIVKPSTFYLDIMRDASEICEDLPICAYHVSGEYAMLHAAAEKGIVDLKSIAFESHEGFLRAGARLIISYFTPEFLDWLSN.

Zn(2+) is bound by residues Cys-133, Cys-135, and Cys-143. The active-site Schiff-base intermediate with substrate is Lys-210. Positions 220 and 232 each coordinate 5-aminolevulinate. The active-site Schiff-base intermediate with substrate is the Lys-263. Ser-290 and Tyr-329 together coordinate 5-aminolevulinate.

It belongs to the ALAD family. In terms of assembly, homooctamer. Requires Zn(2+) as cofactor.

The enzyme catalyses 2 5-aminolevulinate = porphobilinogen + 2 H2O + H(+). Its pathway is porphyrin-containing compound metabolism; protoporphyrin-IX biosynthesis; coproporphyrinogen-III from 5-aminolevulinate: step 1/4. Functionally, catalyzes an early step in the biosynthesis of tetrapyrroles. Binds two molecules of 5-aminolevulinate per subunit, each at a distinct site, and catalyzes their condensation to form porphobilinogen. The sequence is that of Delta-aminolevulinic acid dehydratase (HEM2) from Candida glabrata (strain ATCC 2001 / BCRC 20586 / JCM 3761 / NBRC 0622 / NRRL Y-65 / CBS 138) (Yeast).